The sequence spans 457 residues: Bifunctional protein GlmU (457 aa).

The tract at residues 1 to 230 (MSKRYAVVLA…FEESLGVNDR (230 aa)) is pyrophosphorylase. UDP-N-acetyl-alpha-D-glucosamine contacts are provided by residues 9-12 (LAAG), Lys23, Gln73, and 78-79 (GT). Residue Asp103 coordinates Mg(2+). 4 residues coordinate UDP-N-acetyl-alpha-D-glucosamine: Gly140, Glu155, Asn170, and Asn228. Mg(2+) is bound at residue Asn228. Residues 231–251 (IALAEASKLMQRRINENHMRN) are linker. An N-acetyltransferase region spans residues 252–457 (GVTLVNPENT…GYAKHLNHGK (206 aa)). Residues Arg333 and Lys351 each contribute to the UDP-N-acetyl-alpha-D-glucosamine site. The active-site Proton acceptor is the His363. Tyr366 and Asn377 together coordinate UDP-N-acetyl-alpha-D-glucosamine. Residues 386 to 387 (NY), Ala423, and Arg440 contribute to the acetyl-CoA site.

It in the N-terminal section; belongs to the N-acetylglucosamine-1-phosphate uridyltransferase family. In the C-terminal section; belongs to the transferase hexapeptide repeat family. Homotrimer. Mg(2+) is required as a cofactor.

It localises to the cytoplasm. The enzyme catalyses alpha-D-glucosamine 1-phosphate + acetyl-CoA = N-acetyl-alpha-D-glucosamine 1-phosphate + CoA + H(+). The catalysed reaction is N-acetyl-alpha-D-glucosamine 1-phosphate + UTP + H(+) = UDP-N-acetyl-alpha-D-glucosamine + diphosphate. It functions in the pathway nucleotide-sugar biosynthesis; UDP-N-acetyl-alpha-D-glucosamine biosynthesis; N-acetyl-alpha-D-glucosamine 1-phosphate from alpha-D-glucosamine 6-phosphate (route II): step 2/2. It participates in nucleotide-sugar biosynthesis; UDP-N-acetyl-alpha-D-glucosamine biosynthesis; UDP-N-acetyl-alpha-D-glucosamine from N-acetyl-alpha-D-glucosamine 1-phosphate: step 1/1. Its pathway is bacterial outer membrane biogenesis; LPS lipid A biosynthesis. Its function is as follows. Catalyzes the last two sequential reactions in the de novo biosynthetic pathway for UDP-N-acetylglucosamine (UDP-GlcNAc). The C-terminal domain catalyzes the transfer of acetyl group from acetyl coenzyme A to glucosamine-1-phosphate (GlcN-1-P) to produce N-acetylglucosamine-1-phosphate (GlcNAc-1-P), which is converted into UDP-GlcNAc by the transfer of uridine 5-monophosphate (from uridine 5-triphosphate), a reaction catalyzed by the N-terminal domain. This is Bifunctional protein GlmU from Listeria innocua serovar 6a (strain ATCC BAA-680 / CLIP 11262).